The primary structure comprises 364 residues: Peptide chain release factor 2 (364 aa).

Gln251 bears the N5-methylglutamine mark.

Belongs to the prokaryotic/mitochondrial release factor family. Methylated by PrmC. Methylation increases the termination efficiency of RF2.

The protein localises to the cytoplasm. Its function is as follows. Peptide chain release factor 2 directs the termination of translation in response to the peptide chain termination codons UGA and UAA. The protein is Peptide chain release factor 2 (prfB) of Buchnera aphidicola subsp. Schizaphis graminum (strain Sg).